A 501-amino-acid polypeptide reads, in one-letter code: 2,3-bisphosphoglycerate-independent phosphoglycerate mutase (501 aa).

Mn(2+) contacts are provided by aspartate 12 and serine 62. Serine 62 serves as the catalytic Phosphoserine intermediate. Substrate-binding positions include histidine 121, 150–151, arginine 182, arginine 188, 253–256, and lysine 323; these read RD and RSDR. Mn(2+)-binding residues include aspartate 390, histidine 394, aspartate 431, histidine 432, and histidine 450.

The protein belongs to the BPG-independent phosphoglycerate mutase family. Monomer. Mn(2+) serves as cofactor.

The enzyme catalyses (2R)-2-phosphoglycerate = (2R)-3-phosphoglycerate. It participates in carbohydrate degradation; glycolysis; pyruvate from D-glyceraldehyde 3-phosphate: step 3/5. Its function is as follows. Catalyzes the interconversion of 2-phosphoglycerate and 3-phosphoglycerate. The sequence is that of 2,3-bisphosphoglycerate-independent phosphoglycerate mutase from Ehrlichia canis (strain Jake).